The primary structure comprises 407 residues: RNA-binding motif, single-stranded-interacting protein 2 (407 aa).

Met1 carries the N-acetylmethionine modification. The disordered stretch occupies residues 29–54; it reads QQMAPPSPSNSTPNSSSGSNGNDQLS. The span at 37–50 shows a compositional bias: low complexity; the sequence is SNSTPNSSSGSNGN. 2 RRM domains span residues 56–129 and 135–220; these read TNLY…MAKQ and TNLY…FADG. Residue Ser106 is modified to Phosphoserine. Phosphothreonine is present on Thr269. A phosphoserine mark is found at Ser280 and Ser285.

The protein resides in the nucleus. The protein is RNA-binding motif, single-stranded-interacting protein 2 (RBMS2) of Homo sapiens (Human).